Here is a 311-residue protein sequence, read N- to C-terminus: Ribosomal RNA small subunit methyltransferase H (311 aa).

S-adenosyl-L-methionine-binding positions include 41–43 (GGH), D61, F85, D102, and Q109.

Belongs to the methyltransferase superfamily. RsmH family.

It is found in the cytoplasm. The enzyme catalyses cytidine(1402) in 16S rRNA + S-adenosyl-L-methionine = N(4)-methylcytidine(1402) in 16S rRNA + S-adenosyl-L-homocysteine + H(+). Specifically methylates the N4 position of cytidine in position 1402 (C1402) of 16S rRNA. This is Ribosomal RNA small subunit methyltransferase H from Paracidovorax citrulli (strain AAC00-1) (Acidovorax citrulli).